Here is a 179-residue protein sequence, read N- to C-terminus: Putative ADP-ribosylation factor-like protein 5C (179 aa).

The N-myristoyl glycine moiety is linked to residue glycine 2. Residues 23–30 (GLDNEGKT), 66–70 (DIVRP), and 125–128 (NKQD) each bind GTP.

This sequence belongs to the small GTPase superfamily. Arf family.

Its function is as follows. Binds and exchanges GTP and GDP. In Homo sapiens (Human), this protein is Putative ADP-ribosylation factor-like protein 5C (ARL5C).